The sequence spans 234 residues: (5-formylfuran-3-yl)methyl phosphate synthase (234 aa).

Residue Lys27 is the Schiff-base intermediate with substrate of the active site. Lys85 serves as the catalytic Proton acceptor.

This sequence belongs to the MfnB family.

It catalyses the reaction 2 D-glyceraldehyde 3-phosphate = 4-(hydroxymethyl)-2-furancarboxaldehyde phosphate + phosphate + 2 H2O. The protein operates within cofactor biosynthesis; methanofuran biosynthesis. Its function is as follows. Catalyzes the formation of 4-(hydroxymethyl)-2-furancarboxaldehyde phosphate (4-HFC-P) from two molecules of glyceraldehyde-3-P (GA-3-P). This Methanosarcina acetivorans (strain ATCC 35395 / DSM 2834 / JCM 12185 / C2A) protein is (5-formylfuran-3-yl)methyl phosphate synthase.